The chain runs to 664 residues: L-type lectin-domain containing receptor kinase I.3 (664 aa).

The signal sequence occupies residues Met-1–Ser-21. At Gln-22–Pro-286 the chain is on the extracellular side. Residues Glu-24 to Ser-257 form a legume-lectin like region. Residues Asn-55, Asn-125, Asn-128, Asn-181, Asn-204, Asn-225, and Asn-267 are each glycosylated (N-linked (GlcNAc...) asparagine). The chain crosses the membrane as a helical span at residues Leu-287 to Tyr-307. The Cytoplasmic portion of the chain corresponds to Trp-308–Arg-664. The Protein kinase domain maps to Phe-342 to Phe-619. Residues Val-348–Val-356 and Lys-370 each bind ATP. Catalysis depends on Asp-466, which acts as the Proton acceptor.

It in the C-terminal section; belongs to the protein kinase superfamily. Ser/Thr protein kinase family. The protein in the N-terminal section; belongs to the leguminous lectin family. In terms of processing, autophosphorylated on Ser and Thr residues. In terms of tissue distribution, mostly expressed in roots and flowers, and, to a lower extent, in leaves.

The protein resides in the cell membrane. It catalyses the reaction L-seryl-[protein] + ATP = O-phospho-L-seryl-[protein] + ADP + H(+). The catalysed reaction is L-threonyl-[protein] + ATP = O-phospho-L-threonyl-[protein] + ADP + H(+). In terms of biological role, involved in resistance response to the pathogenic fungus Alternaria brassicicola. The polypeptide is L-type lectin-domain containing receptor kinase I.3 (Arabidopsis thaliana (Mouse-ear cress)).